The chain runs to 88 residues: Pape peptide (88 aa).

The signal sequence occupies residues 1-22 (MNRKTLLVIFFVTLLIAEEVNS). Residues 23–45 (FRLGGFLKKIWRSKLVKRLRSKG) constitute a propeptide that is removed on maturation. The tract at residues 49-88 (LKEALAPEPAPEPAPEPAPEAAPEAAPEPAAAAPERRRRR) is disordered. Pro residues predominate over residues 56 to 68 (EPAPEPAPEPAPE). 3 PAPE repeats span residues 57–60 (PAPE), 61–64 (PAPE), and 65–68 (PAPE). Over residues 69 to 81 (AAPEAAPEPAAAA) the composition is skewed to low complexity.

In terms of tissue distribution, expressed by the venom gland.

It is found in the secreted. The polypeptide is Pape peptide (Tityus serrulatus (Brazilian scorpion)).